The following is a 344-amino-acid chain: tRNA N6-adenosine threonylcarbamoyltransferase (344 aa).

His-112 and His-116 together coordinate Fe cation. Substrate-binding positions include 135-139, Asp-168, Gly-181, and Asn-271; that span reads LVSGG. Position 299 (Asp-299) interacts with Fe cation. A disordered region spans residues 323–344; it reads RARPRWPLDPEAEPVRGAGVKA.

It belongs to the KAE1 / TsaD family. Fe(2+) is required as a cofactor.

It localises to the cytoplasm. It carries out the reaction L-threonylcarbamoyladenylate + adenosine(37) in tRNA = N(6)-L-threonylcarbamoyladenosine(37) in tRNA + AMP + H(+). Its function is as follows. Required for the formation of a threonylcarbamoyl group on adenosine at position 37 (t(6)A37) in tRNAs that read codons beginning with adenine. Is involved in the transfer of the threonylcarbamoyl moiety of threonylcarbamoyl-AMP (TC-AMP) to the N6 group of A37, together with TsaE and TsaB. TsaD likely plays a direct catalytic role in this reaction. This is tRNA N6-adenosine threonylcarbamoyltransferase from Erythrobacter litoralis (strain HTCC2594).